A 440-amino-acid polypeptide reads, in one-letter code: Xylose isomerase (440 aa).

Active-site residues include histidine 101 and aspartate 104. Residues glutamate 232, glutamate 268, histidine 271, aspartate 296, aspartate 307, aspartate 309, and aspartate 339 each contribute to the Mg(2+) site.

The protein belongs to the xylose isomerase family. As to quaternary structure, homotetramer. Mg(2+) is required as a cofactor.

The protein localises to the cytoplasm. It catalyses the reaction alpha-D-xylose = alpha-D-xylulofuranose. This is Xylose isomerase from Escherichia coli (strain SE11).